The sequence spans 496 residues: Probable E3 ubiquitin-protein ligase ARI12 (496 aa).

The tract at residues 110 to 319 (NEYFCGACGE…GDLHFCTFDA (210 aa)) is TRIAD supradomain. Zn(2+) contacts are provided by Cys114, Cys117, Cys131, His133, Cys136, Cys139, Cys162, Cys172, Cys240, Cys243, His248, Cys253, Cys267, Cys270, Cys286, and Cys289. Residues 114–172 (CGACGESHPHKNLASVSCGHRICTRCWTSHINKIISEKPAAEWNLWLKCPVRVGLHASC) form an RING-type 1 zinc finger. Residues 191–253 (FNYNQYLLRS…REDAHSPVDC (63 aa)) form an IBR-type zinc finger. The RING-type 2; atypical zinc finger occupies 267-297 (CPKCKLRIPRNQDNSLKMKCLPCNYVFCWFC).

The protein belongs to the RBR family. Ariadne subfamily. The cofactor is Zn(2+). Preferentially expressed in roots.

It catalyses the reaction [E2 ubiquitin-conjugating enzyme]-S-ubiquitinyl-L-cysteine + [acceptor protein]-L-lysine = [E2 ubiquitin-conjugating enzyme]-L-cysteine + [acceptor protein]-N(6)-ubiquitinyl-L-lysine.. It functions in the pathway protein modification; protein ubiquitination. Its function is as follows. Might act as an E3 ubiquitin-protein ligase, or as part of E3 complex, which accepts ubiquitin from specific E2 ubiquitin-conjugating enzymes and then transfers it to substrates. The protein is Probable E3 ubiquitin-protein ligase ARI12 (ARI12) of Arabidopsis thaliana (Mouse-ear cress).